The chain runs to 188 residues: Protein GrpE (188 aa).

Residues 1–22 are compositionally biased toward low complexity; it reads MEENKQNQNLNTEETTEQQTEA. Positions 1–26 are disordered; sequence MEENKQNQNLNTEETTEQQTEAETVE.

Belongs to the GrpE family. As to quaternary structure, homodimer.

It localises to the cytoplasm. Its function is as follows. Participates actively in the response to hyperosmotic and heat shock by preventing the aggregation of stress-denatured proteins, in association with DnaK and GrpE. It is the nucleotide exchange factor for DnaK and may function as a thermosensor. Unfolded proteins bind initially to DnaJ; upon interaction with the DnaJ-bound protein, DnaK hydrolyzes its bound ATP, resulting in the formation of a stable complex. GrpE releases ADP from DnaK; ATP binding to DnaK triggers the release of the substrate protein, thus completing the reaction cycle. Several rounds of ATP-dependent interactions between DnaJ, DnaK and GrpE are required for fully efficient folding. This is Protein GrpE from Exiguobacterium sibiricum (strain DSM 17290 / CCUG 55495 / CIP 109462 / JCM 13490 / 255-15).